Here is a 154-residue protein sequence, read N- to C-terminus: Large ribosomal subunit protein uL16 (154 aa).

Belongs to the universal ribosomal protein uL16 family. In terms of assembly, part of the 50S ribosomal subunit.

Its function is as follows. Binds 23S rRNA and is also seen to make contacts with the A and possibly P site tRNAs. The chain is Large ribosomal subunit protein uL16 from Synechococcus sp. (strain RCC307).